A 190-amino-acid polypeptide reads, in one-letter code: MPLVHVMLLSCGVAADAFACSIARGTAIRVNIIKRSLILAGIFGVFQALMPVIGWGIGYFFAELSFIRAIDHWVAFLLLAGVGAKMIWDAFHQDADVDVIDTGAVQLRPALILGLATSIDALAVGMGMAFVHAPIITLALAMGLTTFVLSLVGAWMGHHGGGRFGGWATVIGGLVLIGLGGNILFDHMLG.

Helical transmembrane passes span 37–57 (LILAGIFGVFQALMPVIGWGI), 64–84 (LSFIRAIDHWVAFLLLAGVGA), 111–131 (LILGLATSIDALAVGMGMAFV), 135–155 (IITLALAMGLTTFVLSLVGAW), and 164–184 (FGGWATVIGGLVLIGLGGNIL).

This sequence belongs to the MntP (TC 9.B.29) family.

It localises to the cell membrane. Its function is as follows. Probably functions as a manganese efflux pump. In Corynebacterium efficiens (strain DSM 44549 / YS-314 / AJ 12310 / JCM 11189 / NBRC 100395), this protein is Putative manganese efflux pump MntP.